The primary structure comprises 106 residues: Integration host factor subunit alpha (106 aa).

Belongs to the bacterial histone-like protein family. Heterodimer of an alpha and a beta chain.

In terms of biological role, this protein is one of the two subunits of integration host factor, a specific DNA-binding protein that functions in genetic recombination as well as in transcriptional and translational control. The chain is Integration host factor subunit alpha from Methylobacterium radiotolerans (strain ATCC 27329 / DSM 1819 / JCM 2831 / NBRC 15690 / NCIMB 10815 / 0-1).